The following is a 186-amino-acid chain: MKIKEIIVVEGRDDTARIKLAVDADTIETNGSAIDDHVIDQIRLAQKTRGVIILTDPDFPGEKIRKTISEAVPGCKHAFLPKHLAKPKNKRGIGVEHASVESIRACLENVHEEMEAQPSDISAEDLIHAGLIGGPAAKCRRERLGDLLKIGYTNGKQLQKRLQMFQIKKSDFMSALDTVMREEQNE.

The 91-residue stretch at 4–94 (KEIIVVEGRD…AKPKNKRGIG (91 aa)) folds into the Toprim domain. Mg(2+) is bound by residues Glu10, Asp56, and Asp58.

It belongs to the ribonuclease M5 family. As to quaternary structure, requires ribosomal protein L18 (rplR) for catalysis; it can be replaced by 30% dimethylsulfoxide suggesting L18 functions as an rRNA folding chaperone. Mg(2+) is required as a cofactor. Requires Mn(2+) as cofactor. It depends on Ca(2+) as a cofactor.

It is found in the cytoplasm. The enzyme catalyses Endonucleolytic cleavage of RNA, removing 21 and 42 nucleotides, respectively, from the 5'- and 3'-termini of a 5S-rRNA precursor.. Its function is as follows. Required for correct processing of both the 5' and 3' ends of 5S rRNA precursor. Cleaves both sides of a double-stranded region yielding mature 5S rRNA in one step. Releases 5'-phosphoryl and 3'-hydroxy termini. This is Ribonuclease M5 from Bacillus subtilis (strain 168).